Reading from the N-terminus, the 179-residue chain is Protein GrpE (179 aa).

The segment at 1–20 (MSEETKEEIKNEKVDEEVTE) is disordered.

The protein belongs to the GrpE family. As to quaternary structure, homodimer.

Its subcellular location is the cytoplasm. Participates actively in the response to hyperosmotic and heat shock by preventing the aggregation of stress-denatured proteins, in association with DnaK and GrpE. It is the nucleotide exchange factor for DnaK and may function as a thermosensor. Unfolded proteins bind initially to DnaJ; upon interaction with the DnaJ-bound protein, DnaK hydrolyzes its bound ATP, resulting in the formation of a stable complex. GrpE releases ADP from DnaK; ATP binding to DnaK triggers the release of the substrate protein, thus completing the reaction cycle. Several rounds of ATP-dependent interactions between DnaJ, DnaK and GrpE are required for fully efficient folding. The polypeptide is Protein GrpE (Lactococcus lactis subsp. lactis (strain IL1403) (Streptococcus lactis)).